Consider the following 269-residue polypeptide: 5'-nucleotidase SurE (269 aa).

Asp-8, Asp-9, Ser-39, and Asn-92 together coordinate a divalent metal cation.

This sequence belongs to the SurE nucleotidase family. A divalent metal cation serves as cofactor.

The protein localises to the cytoplasm. It catalyses the reaction a ribonucleoside 5'-phosphate + H2O = a ribonucleoside + phosphate. In terms of biological role, nucleotidase that shows phosphatase activity on nucleoside 5'-monophosphates. This Psychrobacter cryohalolentis (strain ATCC BAA-1226 / DSM 17306 / VKM B-2378 / K5) protein is 5'-nucleotidase SurE.